The primary structure comprises 311 residues: Dehydrogenase/reductase SDR family member 7C (311 aa).

An N-terminal signal peptide occupies residues 1-18 (MGFLTFLIVPLLILGISG). Residue 41–65 (VITDAISGLGKECSRVFHSAGARLV) participates in NAD(+) binding. Substrate is bound at residue threonine 178. Residue tyrosine 191 is the Proton acceptor of the active site.

It belongs to the short-chain dehydrogenases/reductases (SDR) family.

It is found in the secreted. Its function is as follows. Putative oxidoreductase. The chain is Dehydrogenase/reductase SDR family member 7C (dhrs7c) from Xenopus tropicalis (Western clawed frog).